Reading from the N-terminus, the 89-residue chain is MSITAEEKARVMKEFATKEGDTGSPEVQVAILSSRIATLTEHFKTHKKDNHGRRGLLKMVATRRKLLDYTKAKDEARYQDLIKRLGLRR.

The protein belongs to the universal ribosomal protein uS15 family. As to quaternary structure, part of the 30S ribosomal subunit. Forms a bridge to the 50S subunit in the 70S ribosome, contacting the 23S rRNA.

Functionally, one of the primary rRNA binding proteins, it binds directly to 16S rRNA where it helps nucleate assembly of the platform of the 30S subunit by binding and bridging several RNA helices of the 16S rRNA. Forms an intersubunit bridge (bridge B4) with the 23S rRNA of the 50S subunit in the ribosome. The sequence is that of Small ribosomal subunit protein uS15 from Roseobacter denitrificans (strain ATCC 33942 / OCh 114) (Erythrobacter sp. (strain OCh 114)).